Here is a 235-residue protein sequence, read N- to C-terminus: Ubiquinone/menaquinone biosynthesis C-methyltransferase UbiE (235 aa).

S-adenosyl-L-methionine contacts are provided by T59, D84, and S123.

It belongs to the class I-like SAM-binding methyltransferase superfamily. MenG/UbiE family.

The enzyme catalyses a 2-demethylmenaquinol + S-adenosyl-L-methionine = a menaquinol + S-adenosyl-L-homocysteine + H(+). It carries out the reaction a 2-methoxy-6-(all-trans-polyprenyl)benzene-1,4-diol + S-adenosyl-L-methionine = a 5-methoxy-2-methyl-3-(all-trans-polyprenyl)benzene-1,4-diol + S-adenosyl-L-homocysteine + H(+). The protein operates within quinol/quinone metabolism; menaquinone biosynthesis; menaquinol from 1,4-dihydroxy-2-naphthoate: step 2/2. Its pathway is cofactor biosynthesis; ubiquinone biosynthesis. In terms of biological role, methyltransferase required for the conversion of demethylmenaquinol (DMKH2) to menaquinol (MKH2) and the conversion of 2-polyprenyl-6-methoxy-1,4-benzoquinol (DDMQH2) to 2-polyprenyl-3-methyl-6-methoxy-1,4-benzoquinol (DMQH2). This is Ubiquinone/menaquinone biosynthesis C-methyltransferase UbiE from Campylobacter jejuni subsp. jejuni serotype O:2 (strain ATCC 700819 / NCTC 11168).